Here is a 250-residue protein sequence, read N- to C-terminus: tRNA (guanine-N(1)-)-methyltransferase (250 aa).

Residues Gly-113 and 134–139 (IGDYVL) contribute to the S-adenosyl-L-methionine site.

It belongs to the RNA methyltransferase TrmD family. Homodimer.

The protein resides in the cytoplasm. It catalyses the reaction guanosine(37) in tRNA + S-adenosyl-L-methionine = N(1)-methylguanosine(37) in tRNA + S-adenosyl-L-homocysteine + H(+). Specifically methylates guanosine-37 in various tRNAs. This is tRNA (guanine-N(1)-)-methyltransferase from Buchnera aphidicola subsp. Baizongia pistaciae (strain Bp).